A 278-amino-acid chain; its full sequence is Large ribosomal subunit protein uL2 (278 aa).

2 disordered regions span residues 29–53 (PVKS…TSRG) and 221–278 (RGVA…KKKR). The span at 269–278 (IRSRHAKKKR) shows a compositional bias: basic residues.

Belongs to the universal ribosomal protein uL2 family. Part of the 50S ribosomal subunit. Forms a bridge to the 30S subunit in the 70S ribosome.

One of the primary rRNA binding proteins. Required for association of the 30S and 50S subunits to form the 70S ribosome, for tRNA binding and peptide bond formation. It has been suggested to have peptidyltransferase activity; this is somewhat controversial. Makes several contacts with the 16S rRNA in the 70S ribosome. The sequence is that of Large ribosomal subunit protein uL2 from Erythrobacter litoralis (strain HTCC2594).